A 215-amino-acid polypeptide reads, in one-letter code: MGQKVNPIGLRLNIVKTWDSRWYADKNYADFVFEDYKLRAFLKKKLFHAGISKIEIERFTKRIRIRVFAARPGIIIGKKGSEIALLKKEIEQMITPEVLIDIQEIRRPEIDAQLVAENISAQLERRIAFRRAMKRSVSSAMRFGAQGIKIICSGRLGGAEMARTEWYKEGRIPLHTLRADVDYGFTEAKTTYGAIGIKTFIFKGEVLKADRNVKA.

The 69-residue stretch at 38–106 folds into the KH type-2 domain; the sequence is LRAFLKKKLF…EVLIDIQEIR (69 aa).

The protein belongs to the universal ribosomal protein uS3 family. Part of the 30S ribosomal subunit. Forms a tight complex with proteins S10 and S14.

In terms of biological role, binds the lower part of the 30S subunit head. Binds mRNA in the 70S ribosome, positioning it for translation. The chain is Small ribosomal subunit protein uS3 from Desulforapulum autotrophicum (strain ATCC 43914 / DSM 3382 / VKM B-1955 / HRM2) (Desulfobacterium autotrophicum).